Reading from the N-terminus, the 171-residue chain is Adenine phosphoribosyltransferase (171 aa).

Belongs to the purine/pyrimidine phosphoribosyltransferase family. In terms of assembly, homodimer.

The protein resides in the cytoplasm. The enzyme catalyses AMP + diphosphate = 5-phospho-alpha-D-ribose 1-diphosphate + adenine. Its pathway is purine metabolism; AMP biosynthesis via salvage pathway; AMP from adenine: step 1/1. Its function is as follows. Catalyzes a salvage reaction resulting in the formation of AMP, that is energically less costly than de novo synthesis. The sequence is that of Adenine phosphoribosyltransferase from Acidiphilium cryptum (strain JF-5).